The chain runs to 189 residues: Peptide deformylase (189 aa).

Fe cation is bound by residues cysteine 116 and histidine 159. Glutamate 160 is a catalytic residue. Position 163 (histidine 163) interacts with Fe cation.

It belongs to the polypeptide deformylase family. Fe(2+) is required as a cofactor.

The enzyme catalyses N-terminal N-formyl-L-methionyl-[peptide] + H2O = N-terminal L-methionyl-[peptide] + formate. Removes the formyl group from the N-terminal Met of newly synthesized proteins. Requires at least a dipeptide for an efficient rate of reaction. N-terminal L-methionine is a prerequisite for activity but the enzyme has broad specificity at other positions. This chain is Peptide deformylase, found in Limosilactobacillus fermentum (strain NBRC 3956 / LMG 18251) (Lactobacillus fermentum).